The primary structure comprises 144 residues: MSRHYEVVFLVHPDQSEQVPAMIERYKSLIEGGNGTIHRLEDWGRRQLAYPIQNLVKAHYVLLNIEVDQAVLSELVESFRFNDAVLRHLVIKRDGPDTEQSLIMKSKDEKGDKPERSERRRRDDEEGDAAPAATDTDGDNAEAA.

The segment at 97–144 is disordered; that stretch reads DTEQSLIMKSKDEKGDKPERSERRRRDDEEGDAAPAATDTDGDNAEAA. Residues 105–124 are compositionally biased toward basic and acidic residues; the sequence is KSKDEKGDKPERSERRRRDD.

It belongs to the bacterial ribosomal protein bS6 family.

In terms of biological role, binds together with bS18 to 16S ribosomal RNA. This Xanthomonas campestris pv. campestris (strain 8004) protein is Small ribosomal subunit protein bS6.